The chain runs to 418 residues: MKLKSGFLGLLYSRGYFNQCTDLAELDQLMSKECVIAYIGFDCTARSLHIGSLMQIMILRYLQKCGHKPIVLLGNGTTKIGDPSGKDKSRTLLSSSDIQENTLGIRKVLEKFIVCGDGVSDALLVYNAEWLDKLNYIDFLRNIGRHFSVNNMLTFDSVKLRLEREQNLSFLEFNYMLLQAYDFIELNQRYNCLLQIGGSDQWGNIVNGVELGRKLKLPQLFGLTTHLLLTSTGEKMGKTANGAVWLDGEMYSPADYWQYFRNVKDEDVGRFLRLFTELPLTEIEKLENLKGYEINEAKKILATEATRICHGEKIAQDIAYDALKVFECNDHSGLPVFYVCKSEIELGLSVVKLLQVSGMEKSNSSAKRLINDKGCKINDIIILDVNYKLSLQDFCGMSYIKLSCGKKRHLKVVLESNL.

Residue tyrosine 38 participates in L-tyrosine binding. Residues 43–52 carry the 'HIGH' region motif; it reads CTARSLHIGS. Residues tyrosine 175 and glutamine 179 each coordinate L-tyrosine. Residues 235–239 carry the 'KMSKS' region motif; that stretch reads KMGKT. Position 238 (lysine 238) interacts with ATP. Residues 348–413 enclose the S4 RNA-binding domain; the sequence is LSVVKLLQVS…CGKKRHLKVV (66 aa).

It belongs to the class-I aminoacyl-tRNA synthetase family. TyrS type 1 subfamily. In terms of assembly, homodimer.

It localises to the cytoplasm. It catalyses the reaction tRNA(Tyr) + L-tyrosine + ATP = L-tyrosyl-tRNA(Tyr) + AMP + diphosphate + H(+). Functionally, catalyzes the attachment of tyrosine to tRNA(Tyr) in a two-step reaction: tyrosine is first activated by ATP to form Tyr-AMP and then transferred to the acceptor end of tRNA(Tyr). The protein is Tyrosine--tRNA ligase of Ehrlichia ruminantium (strain Gardel).